Consider the following 223-residue polypeptide: NLP effector protein 3 (223 aa).

Positions 90–100 match the Conserved undecapeptide motif motif; the sequence is AIMYVWYFPKD. Residues 107–113 carry the Conserved heptapeptide motif motif; the sequence is GHRHDWE.

This sequence belongs to the Necrosis inducing protein (NPP1) family.

The protein resides in the secreted. It is found in the host cytoplasm. Its function is as follows. Probable secreted effector that may act as a pathogen-associated molecular pattern (PAMP) recognized by the plant immune system. Seems not to induce necrosis, neither in several susceptible or resistant Vitis species nor in the dicot model plant Nicotiana benthamiana. In Plasmopara viticola (Downy mildew of grapevine), this protein is NLP effector protein 3.